Consider the following 507-residue polypeptide: Maturase K (507 aa).

This sequence belongs to the intron maturase 2 family. MatK subfamily.

Its subcellular location is the plastid. The protein resides in the chloroplast. In terms of biological role, usually encoded in the trnK tRNA gene intron. Probably assists in splicing its own and other chloroplast group II introns. This chain is Maturase K, found in Lens culinaris (Lentil).